A 207-amino-acid chain; its full sequence is Fibroblast growth factor 18 (207 aa).

The N-terminal stretch at 1-27 (MYSAPSACTCLCLHFLLLCFQVQVLAA) is a signal peptide. N-linked (GlcNAc...) asparagine glycosylation is present at Asn39. Cys109 and Cys127 are oxidised to a cystine. A glycan (N-linked (GlcNAc...) asparagine) is linked at Asn137.

The protein belongs to the heparin-binding growth factors family. In terms of assembly, interacts with FGFR3 and FGFR4.

Its subcellular location is the secreted. Plays an important role in the regulation of cell proliferation, cell differentiation and cell migration. Required for normal ossification and bone development. Stimulates hepatic and intestinal proliferation. The polypeptide is Fibroblast growth factor 18 (Fgf18) (Mus musculus (Mouse)).